Here is an 808-residue protein sequence, read N- to C-terminus: Phenylalanine--tRNA ligase beta subunit (808 aa).

The 116-residue stretch at 40–155 (NQGATGVVVG…DDVEIGSDAL (116 aa)) folds into the tRNA-binding domain. The region spanning 409-484 (IEEPVVSLNL…RLYGYDNIPT (76 aa)) is the B5 domain. Mg(2+) is bound by residues Asp-462, Asp-468, Glu-471, and Glu-472. Positions 714 to 807 (PRFPAISRDI…LEASTGAVLR (94 aa)) constitute an FDX-ACB domain.

Belongs to the phenylalanyl-tRNA synthetase beta subunit family. Type 1 subfamily. Tetramer of two alpha and two beta subunits. It depends on Mg(2+) as a cofactor.

Its subcellular location is the cytoplasm. The enzyme catalyses tRNA(Phe) + L-phenylalanine + ATP = L-phenylalanyl-tRNA(Phe) + AMP + diphosphate + H(+). This Halalkalibacterium halodurans (strain ATCC BAA-125 / DSM 18197 / FERM 7344 / JCM 9153 / C-125) (Bacillus halodurans) protein is Phenylalanine--tRNA ligase beta subunit (pheT).